A 342-amino-acid polypeptide reads, in one-letter code: Probable receptor-like protein kinase At4g10390 (342 aa).

A Protein kinase domain is found at 41-336; it reads SNFSRLIGSG…IKEIPSLSFL (296 aa). ATP contacts are provided by residues 47–55 and K69; that span reads IGSGGYSSI. D165 serves as the catalytic Proton acceptor. Residues S169 and S201 each carry the phosphoserine modification. Y220 bears the Phosphotyrosine mark.

This sequence belongs to the protein kinase superfamily. Ser/Thr protein kinase family.

It catalyses the reaction L-seryl-[protein] + ATP = O-phospho-L-seryl-[protein] + ADP + H(+). It carries out the reaction L-threonyl-[protein] + ATP = O-phospho-L-threonyl-[protein] + ADP + H(+). This chain is Probable receptor-like protein kinase At4g10390, found in Arabidopsis thaliana (Mouse-ear cress).